Consider the following 307-residue polypeptide: uncharacterized protein (307 aa).

The HTH lysR-type domain occupies I11–T68. Residues L28 to N47 constitute a DNA-binding region (H-T-H motif).

It belongs to the LysR transcriptional regulatory family.

This is an uncharacterized protein from Escherichia coli (strain K12).